A 311-amino-acid chain; its full sequence is Homeobox protein Hox-B1a (311 aa).

The homeobox DNA-binding region spans Gln-217 to Glu-276. The segment at Asn-267–Ser-311 is disordered. A compositionally biased stretch (low complexity) spans Ser-298–Ser-311.

The protein belongs to the Antp homeobox family. Labial subfamily.

The protein localises to the nucleus. Its function is as follows. Sequence-specific transcription factor which is part of a developmental regulatory system that provides cells with specific positional identities on the anterior-posterior axis. This is Homeobox protein Hox-B1a (hoxb1a) from Danio rerio (Zebrafish).